The following is a 78-amino-acid chain: uncharacterized protein (78 aa).

The segment at 1 to 28 is disordered; that stretch reads MQANHSVSYLYESSTSKRSNGLFSQTQK.

This is an uncharacterized protein from Saccharomyces cerevisiae (strain ATCC 204508 / S288c) (Baker's yeast).